The primary structure comprises 124 residues: Large ribosomal subunit protein bL12 (124 aa).

This sequence belongs to the bacterial ribosomal protein bL12 family. As to quaternary structure, homodimer. Part of the ribosomal stalk of the 50S ribosomal subunit. Forms a multimeric L10(L12)X complex, where L10 forms an elongated spine to which 2 to 4 L12 dimers bind in a sequential fashion. Binds GTP-bound translation factors.

Functionally, forms part of the ribosomal stalk which helps the ribosome interact with GTP-bound translation factors. Is thus essential for accurate translation. This Ralstonia nicotianae (strain ATCC BAA-1114 / GMI1000) (Ralstonia solanacearum) protein is Large ribosomal subunit protein bL12.